The following is a 229-amino-acid chain: MVHPLLFLQFFRKLLEPLHISEAGADAIAYTWLIIVCLLIVSLIATKALKAVPTGMQNFMEVVIGGIENMVEETMGEKGKPYFPLIATLALFVLVSNLIGLIPGFFPPTANLNTTAACAVIVFLSTHIVGIKKHGFHYLQHFMGPIWWLAPLMFFIEIIGHLSRPLSLSLRLFGNMNGHELVLMIFFALAPFLVPLPMMLMGVLVSFIQAFVFMLLAMIYIQGSLEEAH.

A run of 6 helical transmembrane segments spans residues 25 to 45 (ADAI…SLIA), 86 to 106 (IATL…PGFF), 111 to 131 (NLNT…IVGI), 142 to 162 (FMGP…IGHL), 181 to 201 (LVLM…MMLM), and 202 to 222 (GVLV…IYIQ).

The protein belongs to the ATPase A chain family. As to quaternary structure, F-type ATPases have 2 components, CF(1) - the catalytic core - and CF(0) - the membrane proton channel. CF(1) has five subunits: alpha(3), beta(3), gamma(1), delta(1), epsilon(1). CF(0) has three main subunits: a(1), b(2) and c(9-12). The alpha and beta chains form an alternating ring which encloses part of the gamma chain. CF(1) is attached to CF(0) by a central stalk formed by the gamma and epsilon chains, while a peripheral stalk is formed by the delta and b chains.

It is found in the cell inner membrane. Its function is as follows. Key component of the proton channel; it plays a direct role in the translocation of protons across the membrane. The polypeptide is ATP synthase subunit a (Geobacter sulfurreducens (strain ATCC 51573 / DSM 12127 / PCA)).